Here is a 464-residue protein sequence, read N- to C-terminus: ATP synthase subunit beta (464 aa).

152 to 159 serves as a coordination point for ATP; the sequence is GGAGVGKT.

Belongs to the ATPase alpha/beta chains family. F-type ATPases have 2 components, CF(1) - the catalytic core - and CF(0) - the membrane proton channel. CF(1) has five subunits: alpha(3), beta(3), gamma(1), delta(1), epsilon(1). CF(0) has three main subunits: a(1), b(2) and c(9-12). The alpha and beta chains form an alternating ring which encloses part of the gamma chain. CF(1) is attached to CF(0) by a central stalk formed by the gamma and epsilon chains, while a peripheral stalk is formed by the delta and b chains.

The protein localises to the cell membrane. The catalysed reaction is ATP + H2O + 4 H(+)(in) = ADP + phosphate + 5 H(+)(out). Functionally, produces ATP from ADP in the presence of a proton gradient across the membrane. The catalytic sites are hosted primarily by the beta subunits. The protein is ATP synthase subunit beta of Clostridioides difficile (strain 630) (Peptoclostridium difficile).